A 76-amino-acid chain; its full sequence is Large ribosomal subunit protein eL20 (76 aa).

Belongs to the eukaryotic ribosomal protein eL20 family. Part of the 50S ribosomal subunit. Binds 23S rRNA.

In Methanococcus vannielii (strain ATCC 35089 / DSM 1224 / JCM 13029 / OCM 148 / SB), this protein is Large ribosomal subunit protein eL20.